The sequence spans 399 residues: Probable aspartate/prephenate aminotransferase (399 aa).

L-aspartate is bound by residues glycine 39, tryptophan 125, and asparagine 175. Residue lysine 239 is modified to N6-(pyridoxal phosphate)lysine. Position 375 (arginine 375) interacts with L-aspartate.

It belongs to the class-I pyridoxal-phosphate-dependent aminotransferase family. In terms of assembly, homodimer. It depends on pyridoxal 5'-phosphate as a cofactor.

Its subcellular location is the cytoplasm. It carries out the reaction L-aspartate + 2-oxoglutarate = oxaloacetate + L-glutamate. The enzyme catalyses L-arogenate + 2-oxoglutarate = prephenate + L-glutamate. Its function is as follows. Catalyzes the reversible conversion of aspartate and 2-oxoglutarate to glutamate and oxaloacetate. Can also transaminate prephenate in the presence of glutamate. This chain is Probable aspartate/prephenate aminotransferase (aatA), found in Rickettsia typhi (strain ATCC VR-144 / Wilmington).